We begin with the raw amino-acid sequence, 83 residues long: Acyl carrier protein MmaB (83 aa).

One can recognise a Carrier domain in the interval 3–83 (DPVRQRILLA…LSQSELESPT (81 aa)). O-(pantetheine 4'-phosphoryl)serine is present on serine 39.

Belongs to the acyl carrier protein (ACP) family. It depends on pantetheine 4'-phosphate as a cofactor.

It functions in the pathway lipid metabolism; fatty acid metabolism. Acyl-carrier protein (ACP) involved in the biosynthesis of a unique class of isonitrile lipopeptides (INLPs) that seem to play a role in metal acquisition in M.marinum. Is the dedicated ACP for the loading of activated acyl groups catalyzed by MmaC. This chain is Acyl carrier protein MmaB, found in Mycobacterium marinum (strain ATCC BAA-535 / M).